A 310-amino-acid chain; its full sequence is Lipoyl synthase (310 aa).

Positions 61, 66, 72, 87, 91, 94, and 300 each coordinate [4Fe-4S] cluster. One can recognise a Radical SAM core domain in the interval 73–289 (FNNGTATFMI…EYIALSLGFS (217 aa)).

This sequence belongs to the radical SAM superfamily. Lipoyl synthase family. The cofactor is [4Fe-4S] cluster.

It localises to the cytoplasm. The enzyme catalyses [[Fe-S] cluster scaffold protein carrying a second [4Fe-4S](2+) cluster] + N(6)-octanoyl-L-lysyl-[protein] + 2 oxidized [2Fe-2S]-[ferredoxin] + 2 S-adenosyl-L-methionine + 4 H(+) = [[Fe-S] cluster scaffold protein] + N(6)-[(R)-dihydrolipoyl]-L-lysyl-[protein] + 4 Fe(3+) + 2 hydrogen sulfide + 2 5'-deoxyadenosine + 2 L-methionine + 2 reduced [2Fe-2S]-[ferredoxin]. It participates in protein modification; protein lipoylation via endogenous pathway; protein N(6)-(lipoyl)lysine from octanoyl-[acyl-carrier-protein]: step 2/2. Its function is as follows. Catalyzes the radical-mediated insertion of two sulfur atoms into the C-6 and C-8 positions of the octanoyl moiety bound to the lipoyl domains of lipoate-dependent enzymes, thereby converting the octanoylated domains into lipoylated derivatives. The protein is Lipoyl synthase of Buchnera aphidicola subsp. Cinara cedri (strain Cc).